Reading from the N-terminus, the 365-residue chain is Dehydroprecondylocarpine acetate synthase (365 aa).

Positions 105, 108, 111, and 119 each coordinate Zn(2+). N-linked (GlcNAc...) asparagine glycosylation is found at Asn142 and Asn147. NADP(+) contacts are provided by Leu194, Gly196, Leu197, Ser216, Thr217, Thr218, Lys221, Leu279, Ala281, Ser303, Ala305, and Arg350.

Belongs to the zinc-containing alcohol dehydrogenase family. Homodimer. Interaction with catharanthine synthase (CS) and tabersonine synthase (TS). The cofactor is Zn(2+).

Its subcellular location is the cytoplasm. It is found in the cytosol. The catalysed reaction is dihydroprecondylocarpine acetate + NADP(+) = precondylocarpine acetate + NADPH + H(+). It functions in the pathway alkaloid biosynthesis. Component of the seco-iridoid and derivatives monoterpenoid indole alkaloids (MIAs, e.g. vinblastine, catharanthine, tabersonine, vincadifformine, vindoline, vincristine, quinine and strychnine) biosynthesis pathway. Catalyzes the non-canonical 1,4-reduction of an alpha,beta-unsaturated iminium moiety; by contrast with the classic alcohol dehydrogenase mechanism, this reaction does not require a catalytic zinc or proton relay. Converts precondylocarpine acetate to dihydroprecondylocarpine acetate, that is spontaneously converted into dehydrosecodine intermediate, precursor of angryline. May also trigger the non-stereoselective 1,4-reduction reaction at C15 of dehydrosecodine leading to the production of secodine, a precursor of vincadifformine. In Catharanthus roseus (Madagascar periwinkle), this protein is Dehydroprecondylocarpine acetate synthase.